The following is a 281-amino-acid chain: Cell growth regulator with EF hand domain protein 1 (281 aa).

The signal sequence occupies residues 1–21 (MSRWLMQMLMLPLLLLPLGQA). 2 EF-hand domains span residues 71–106 (NREQ…ALAP) and 115–150 (PVIL…APKR). The Ca(2+) site is built by Asp-84, Asp-86, Asn-88, Gln-90, Glu-95, Asp-128, Asp-130, Asp-132, and Glu-139. The interval 146–281 (EAPKRAESLP…HSIQLENDEI (136 aa)) is disordered. Polar residues predominate over residues 169–184 (LLANSPLQSETQQSLG). The span at 185-213 (TKEEITSQVEAKRALEPEQEAGHHIETKV) shows a compositional bias: basic and acidic residues. 2 positions are modified to phosphoserine: Ser-217 and Ser-228. A compositionally biased stretch (basic and acidic residues) spans 234 to 256 (GPREDAERQVESKDNEGEAKDLP).

Post-translationally, probably digested extracellularly by an unknown serine protease generating extremely hydrophobic bioactive peptides. As to expression, expressed predominantly in whole brain and kidney, with limited expression in heart, lung, liver, and skeletal muscle and no expression in spleen and testis. Also expressed in pituitary gland, adrenal gland, digestive tract, and reproductive organs.

It is found in the secreted. In terms of biological role, mediates cell-cell adhesion in a calcium-dependent manner. Able to inhibit growth in several cell lines. The polypeptide is Cell growth regulator with EF hand domain protein 1 (Rattus norvegicus (Rat)).